The primary structure comprises 645 residues: Developmental regulatory protein wetA (645 aa).

Disordered regions lie at residues 158–187 (SLHS…RKPK), 201–249 (TNLR…VSPP), 284–376 (YYGQ…QMHW), 461–578 (AQTF…DGAS), and 596–618 (GVAP…DRRR). Polar residues predominate over residues 240 to 249 (TQGNLPVSPP). Composition is skewed to basic residues over residues 315-326 (QHHHHPHHHHQQ) and 351-361 (QHQHQHHHQQQ). A compositionally biased stretch (low complexity) spans 362–373 (QHHQQQQQQQHQ). A compositionally biased stretch (polar residues) spans 509–518 (GPSSSPTPAD). The segment covering 528–546 (SSGASVSSLRSSSGRLPAS) has biased composition (low complexity). Over residues 562–572 (ISGSNSATSLG) the composition is skewed to polar residues.

This sequence belongs to the wetA family.

BrlA, abaA and wetA are pivotal regulators of conidiophore development and conidium maturation. They act individually and together to regulate their own expression and that of numerous other sporulation-specific genes. BrlA, abaA and wetA act together to positively regulate the expression of the Pks1 gene cluster that mediates the biosynthesis of an anthraquinone derivative pigment that contributes to conidial pigmentation that provides protection from UV radiation, heat and cold stress. This is Developmental regulatory protein wetA from Metarhizium robertsii (strain ARSEF 23 / ATCC MYA-3075) (Metarhizium anisopliae (strain ARSEF 23)).